The chain runs to 206 residues: BAG family molecular chaperone regulator 1B (206 aa).

The 81-residue stretch at Ile-122–Lys-202 folds into the BAG domain. Ser-144 carries the post-translational modification Phosphoserine.

Binds to the ATPase domain of HSP70/HSC chaperones.

Functionally, inhibits the chaperone activity of HSP70/HSC70 by promoting substrate release. This is BAG family molecular chaperone regulator 1B (bag102) from Schizosaccharomyces pombe (strain 972 / ATCC 24843) (Fission yeast).